The following is a 1277-amino-acid chain: Clustered mitochondria protein 1 (1277 aa).

Disordered regions lie at residues 19–39 and 148–176; these read LPKE…QSSK and LPLG…NTFK. Residues 27–36 are compositionally biased toward basic residues; that stretch reads HNTKHLKKTQ. The span at 153 to 176 shows a compositional bias: basic and acidic residues; the sequence is IKERSKQEEKDEKSDPEEKKNTFK. The Clu domain maps to 339–596; the sequence is PPNNPDYLRL…NTYPLDINFA (258 aa). TPR repeat units follow at residues 704–738, 1020–1053, and 1148–1181; these read GINM…VEQD, AEKY…YERV, and GYTE…FTKQ. Residues 1212-1277 form a disordered region; it reads LAQDQMSTTG…TNNKKKHGKK (66 aa). A compositionally biased stretch (basic and acidic residues) spans 1235–1249; sequence KKDDVKPELANKSVD. Position 1247 is a phosphoserine (serine 1247). Basic residues predominate over residues 1264 to 1277; it reads SKNKTNNKKKHGKK.

It belongs to the CLU family. In terms of assembly, may associate with the eukaryotic translation initiation factor 3 (eIF-3) complex. Associates with the 80S ribosome.

The protein localises to the cytoplasm. In terms of biological role, mRNA-binding protein involved in proper cytoplasmic distribution of mitochondria. This is Clustered mitochondria protein 1 from Saccharomyces cerevisiae (strain ATCC 204508 / S288c) (Baker's yeast).